The following is a 179-amino-acid chain: Zinc finger HIT domain-containing protein 3 (179 aa).

Cys-11, Cys-14, Cys-22, Cys-25, Cys-30, Cys-34, His-38, and Cys-49 together coordinate Zn(2+). The HIT-type zinc finger occupies Cys-11 to Cys-49. The residue at position 104 (Ser-104) is a Phosphoserine.

Thyroid receptor interacting proteins (TRIPs) specifically interact with the ligand binding domain of the thyroid receptor (TR). Requires the presence of thyroid hormone for its interaction. Interacts with NUFIP1. Interacts (via HIT-type zinc finger) with the RUVBL1/RUVBL2 complex in the presence of ADP.

It is found in the cytoplasm. The protein localises to the nucleus. This chain is Zinc finger HIT domain-containing protein 3 (ZNHIT3), found in Bos taurus (Bovine).